Here is a 135-residue protein sequence, read N- to C-terminus: Succinate dehydrogenase assembly factor 2, mitochondrial (135 aa).

Belongs to the SDHAF2 family. Interacts with the flavoprotein subunit within the SDH catalytic dimer.

The protein localises to the mitochondrion matrix. In terms of biological role, plays an essential role in the assembly of succinate dehydrogenase (SDH), an enzyme complex (also referred to as respiratory complex II) that is a component of both the tricarboxylic acid (TCA) cycle and the mitochondrial electron transport chain, and which couples the oxidation of succinate to fumarate with the reduction of ubiquinone (coenzyme Q) to ubiquinol. Required for flavinylation (covalent attachment of FAD) of the flavoprotein subunit of the SDH catalytic dimer. In Meyerozyma guilliermondii (strain ATCC 6260 / CBS 566 / DSM 6381 / JCM 1539 / NBRC 10279 / NRRL Y-324) (Yeast), this protein is Succinate dehydrogenase assembly factor 2, mitochondrial.